Here is a 591-residue protein sequence, read N- to C-terminus: L-fucose isomerase (591 aa).

Residues Glu-337 and Asp-361 each act as proton acceptor in the active site. The Mn(2+) site is built by Glu-337, Asp-361, and His-528.

This sequence belongs to the L-fucose isomerase family. As to quaternary structure, homohexamer. The cofactor is Mn(2+).

It is found in the cytoplasm. It carries out the reaction L-fucose = L-fuculose. The protein operates within carbohydrate degradation; L-fucose degradation; L-lactaldehyde and glycerone phosphate from L-fucose: step 1/3. Converts the aldose L-fucose into the corresponding ketose L-fuculose. This Salmonella paratyphi A (strain ATCC 9150 / SARB42) protein is L-fucose isomerase.